The primary structure comprises 150 residues: Putative pre-16S rRNA nuclease (150 aa).

The protein belongs to the YqgF nuclease family.

The protein localises to the cytoplasm. In terms of biological role, could be a nuclease involved in processing of the 5'-end of pre-16S rRNA. The polypeptide is Putative pre-16S rRNA nuclease (Syntrophus aciditrophicus (strain SB)).